A 180-amino-acid polypeptide reads, in one-letter code: Flavodoxin 2 (180 aa).

Positions 4 to 173 (IGLFFGSNTG…RVAAWLAQIA (170 aa)) constitute a Flavodoxin-like domain. Residues 10–15 (SNTGKT), threonine 57, glycine 61, aspartate 99, 106–108 (NYL), and aspartate 155 contribute to the FMN site.

FMN serves as cofactor.

Functionally, flavodoxins are low-potential electron donors to a number of redox enzymes. NifF is the electron donor to nitrogenase, and is thus implicated in nitrogen fixation. Does not function as an electron donor to nitrite reductase. The polypeptide is Flavodoxin 2 (Azotobacter vinelandii).